The chain runs to 518 residues: Probable triacylglyceride transporter BCG_1471c (518 aa).

The next 14 helical transmembrane spans lie at 7-27 (VAISAGSLAVLLGALDTYVVV), 46-66 (RITWIVTMYLLGYIAAMPLLG), 76-96 (LMLQVSLAGFIIGSVVTALAG), 110-130 (IQGVASGALLPITLALGADLW), 144-164 (AAQELGSVLGPLYGIFIVWLL), 170-190 (VFWINVPLTAIAMVMIHFSLP), 201-221 (VDLVGGLLLALALGLAVIGLY), 230-250 (VLPDYGAPLLVGALVAAVAFF), 270-290 (PFLSALGASVAAGAALMVTLV), 308-328 (AGMLLWFLIALPIGAVTGGWI), 337-357 (VAFAGLLIAAYGYWLISHWPV), 379-401 (LVVAGLGLGLVIGPLSSATLRVV), 408-428 (IASAAVVVARMTGMLIGVAAL), and 475-495 (IFTITAIVCVFGAVLGLLISG).

The protein belongs to the major facilitator superfamily.

It is found in the cell inner membrane. With respect to regulation, inhibited by CCCP and valinomycin. Functionally, in association with lipoprotein LprG probably transports triacylglycerides (TAG) across the inner cell membrane into the periplasm; TAG probably regulates lipid metabolism and growth regulation. Confers resistance to several drugs such as rifampicin, clofazimine and novobiocin; is also part of the oxidative stress response and is needed to maintain normal growth characteristics. Probably an efflux transporter, involved in maintaining correct cell wall permeability. Probably required with LprG for normal surface localization of lipoarabinomannan (LAM). Required for optimal growth on cholesterol. In Mycobacterium bovis (strain BCG / Pasteur 1173P2), this protein is Probable triacylglyceride transporter BCG_1471c.